The chain runs to 167 residues: Probable host range protein 2 (167 aa).

Belongs to the poxviridae C7 protein family.

In terms of biological role, plays a role for multiplication of the virus in different cell types. The sequence is that of Probable host range protein 2 from Yaba monkey tumor virus (strain VR587) (YMTV).